Consider the following 362-residue polypeptide: MVRALIRRVLGRQENDQSTPQLELPPTDSRDRARSMVMGLQDEICAGLEALDGEGRFQEESWVRPEGGGGRSRVMREGRVFEQGGVNFSEVQGNELPPSILKQRPEAKGHPWFATGTSMVLHPRNPYIPTVHLNYRYFEAGPVWWFGGGADLTPYYPFLDDARHFHRTHQQACNSVHPNLHKVFKPWCDEYFYLKHRNETRGVGGIFYDYQDSRGTLYKGQDPTGAAAKVSSELGATPLSWEQLFSLGQANGRAFLPSYAPIVEKRHATSYGDRERDFQLYRRGRYVEFNLVWDRGTIFGLQTNGRTESILMSLPPLVRWEYGYTAEAGSREALLTDLFTTPQDWLGDPSLEERCRPHQAIN.

The tract at residues 12-31 is disordered; sequence RQENDQSTPQLELPPTDSRD. Position 118 (serine 118) interacts with substrate. Histidine 122 and histidine 132 together coordinate a divalent metal cation. Histidine 132 serves as the catalytic Proton donor. Residue 134 to 136 participates in substrate binding; that stretch reads NYR. Residues histidine 166 and histidine 196 each coordinate a divalent metal cation. The segment at 286–321 is important for dimerization; sequence YVEFNLVWDRGTIFGLQTNGRTESILMSLPPLVRWE.

Belongs to the aerobic coproporphyrinogen-III oxidase family. In terms of assembly, homodimer. The cofactor is a divalent metal cation.

It localises to the cytoplasm. It catalyses the reaction coproporphyrinogen III + O2 + 2 H(+) = protoporphyrinogen IX + 2 CO2 + 2 H2O. It functions in the pathway porphyrin-containing compound metabolism; protoporphyrin-IX biosynthesis; protoporphyrinogen-IX from coproporphyrinogen-III (O2 route): step 1/1. Its function is as follows. Involved in the heme and chlorophyll biosynthesis. Catalyzes the aerobic oxidative decarboxylation of propionate groups of rings A and B of coproporphyrinogen-III to yield the vinyl groups in protoporphyrinogen-IX. The polypeptide is Oxygen-dependent coproporphyrinogen-III oxidase (Synechococcus sp. (strain CC9902)).